Consider the following 399-residue polypeptide: Lovastatin esterase (399 aa).

The Nucleophile role is filled by serine 57. Residues lysine 60 and tyrosine 170 each act as proton acceptor in the active site.

This sequence belongs to the class-A beta-lactamase family.

The catalysed reaction is lovastatin + H2O = monacolin J + (S)-2-methylbutanoate + H(+). It carries out the reaction pravastatin lactone + H2O = pravastatin diol lactone + (S)-2-methylbutanoate + H(+). The enzyme catalyses mevastatin + H2O = compactin diol lactone + (S)-2-methylbutanoate + H(+). Its function is as follows. Esterase that can hydrolyze the side chain of lovastatin to produce monacolin J. Is also able to hydrolyze the side chains of mevastatin and pravastatin, but not simvastatin. This chain is Lovastatin esterase, found in Penicillium rubens (strain ATCC 28089 / DSM 1075 / NRRL 1951 / Wisconsin 54-1255) (Penicillium chrysogenum).